Here is a 161-residue protein sequence, read N- to C-terminus: Large ribosomal subunit protein uL10 (161 aa).

This sequence belongs to the universal ribosomal protein uL10 family. As to quaternary structure, part of the ribosomal stalk of the 50S ribosomal subunit. The N-terminus interacts with L11 and the large rRNA to form the base of the stalk. The C-terminus forms an elongated spine to which L12 dimers bind in a sequential fashion forming a multimeric L10(L12)X complex.

Functionally, forms part of the ribosomal stalk, playing a central role in the interaction of the ribosome with GTP-bound translation factors. In Malacoplasma penetrans (strain HF-2) (Mycoplasma penetrans), this protein is Large ribosomal subunit protein uL10.